Consider the following 376-residue polypeptide: Respiration factor 1 (376 aa).

Disordered stretches follow at residues 1-23 (MKDL…DNRG), 88-107 (VNVT…NSTK), 258-279 (FKEK…TGSS), and 347-376 (GVNE…QHTN). A compositionally biased stretch (low complexity) spans 354 to 376 (NSSNLNNSNSGTPHNHNQNQHTN).

The protein resides in the cytoplasm. The protein localises to the nucleus. It is found in the mitochondrion. Functionally, mitochondrial and nuclear transcriptional activator required for respiratory growth. The chain is Respiration factor 1 (RSF1) from Saccharomyces cerevisiae (strain YJM789) (Baker's yeast).